A 465-amino-acid polypeptide reads, in one-letter code: Probable oxidoreductase AIM17 (465 aa).

The transit peptide at 1–16 (MLRSNLCRGSRILARL) directs the protein to the mitochondrion. 3 residues coordinate Fe cation: H246, D248, and H428.

It belongs to the gamma-BBH/TMLD family. It depends on Fe(2+) as a cofactor. L-ascorbate serves as cofactor.

It localises to the mitochondrion. This chain is Probable oxidoreductase AIM17 (AIM17), found in Saccharomyces cerevisiae (strain ATCC 204508 / S288c) (Baker's yeast).